We begin with the raw amino-acid sequence, 149 residues long: NADH-quinone oxidoreductase subunit A (149 aa).

The next 3 membrane-spanning stretches (helical) occupy residues 16–36 (FAVF…GAFF), 68–88 (FYLV…LYAW), and 98–118 (LGFI…FYLV).

This sequence belongs to the complex I subunit 3 family. As to quaternary structure, NDH-1 is composed of 13 different subunits. Subunits NuoA, H, J, K, L, M, N constitute the membrane sector of the complex.

It is found in the cell inner membrane. The catalysed reaction is a quinone + NADH + 5 H(+)(in) = a quinol + NAD(+) + 4 H(+)(out). NDH-1 shuttles electrons from NADH, via FMN and iron-sulfur (Fe-S) centers, to quinones in the respiratory chain. The immediate electron acceptor for the enzyme in this species is believed to be ubiquinone. Couples the redox reaction to proton translocation (for every two electrons transferred, four hydrogen ions are translocated across the cytoplasmic membrane), and thus conserves the redox energy in a proton gradient. This is NADH-quinone oxidoreductase subunit A from Photorhabdus laumondii subsp. laumondii (strain DSM 15139 / CIP 105565 / TT01) (Photorhabdus luminescens subsp. laumondii).